The following is a 142-amino-acid chain: Large ribosomal subunit protein uL16 (142 aa).

The protein belongs to the universal ribosomal protein uL16 family. Part of the 50S ribosomal subunit.

Functionally, binds 23S rRNA and is also seen to make contacts with the A and possibly P site tRNAs. In Thermosipho melanesiensis (strain DSM 12029 / CIP 104789 / BI429), this protein is Large ribosomal subunit protein uL16.